Consider the following 312-residue polypeptide: DNA-directed RNA polymerase subunit alpha (312 aa).

The segment at 1-229 is alpha N-terminal domain (alpha-NTD); sequence MLQYQIDRIE…ELFQPLATVT (229 aa). An alpha C-terminal domain (alpha-CTD) region spans residues 246 to 312; sequence IPLEELNLSV…ISIPQSRTSA (67 aa).

It belongs to the RNA polymerase alpha chain family. In cyanobacteria the RNAP catalytic core is composed of 2 alpha, 1 beta, 1 beta', 1 gamma and 1 omega subunit. When a sigma factor is associated with the core the holoenzyme is formed, which can initiate transcription.

The catalysed reaction is RNA(n) + a ribonucleoside 5'-triphosphate = RNA(n+1) + diphosphate. Functionally, DNA-dependent RNA polymerase catalyzes the transcription of DNA into RNA using the four ribonucleoside triphosphates as substrates. The protein is DNA-directed RNA polymerase subunit alpha of Prochlorococcus marinus (strain SARG / CCMP1375 / SS120).